The chain runs to 401 residues: Nicotinate phosphoribosyltransferase (401 aa).

The residue at position 224 (His224) is a Phosphohistidine; by autocatalysis.

It belongs to the NAPRTase family. In terms of processing, transiently phosphorylated on a His residue during the reaction cycle. Phosphorylation strongly increases the affinity for substrates and increases the rate of nicotinate D-ribonucleotide production. Dephosphorylation regenerates the low-affinity form of the enzyme, leading to product release.

The catalysed reaction is nicotinate + 5-phospho-alpha-D-ribose 1-diphosphate + ATP + H2O = nicotinate beta-D-ribonucleotide + ADP + phosphate + diphosphate. Its pathway is cofactor biosynthesis; NAD(+) biosynthesis; nicotinate D-ribonucleotide from nicotinate: step 1/1. Its function is as follows. Catalyzes the synthesis of beta-nicotinate D-ribonucleotide from nicotinate and 5-phospho-D-ribose 1-phosphate at the expense of ATP. In Pseudomonas putida (strain GB-1), this protein is Nicotinate phosphoribosyltransferase.